A 586-amino-acid polypeptide reads, in one-letter code: uncharacterized protein (586 aa).

A disordered region spans residues 1 to 115 (MRVLVAETGR…NTEKLAGRDD (115 aa)). Residues 8–20 (TGREDNVSVHSRE) show a composition bias toward basic and acidic residues. The segment covering 21-31 (VSVNGSDSGTG) has biased composition (polar residues). Positions 35-44 (YKLETDDEHP) are enriched in basic and acidic residues. Residues 76-107 (TGMNTEYNDDNSSLVNTPRDSTTYAETNSPNT) show a composition bias toward polar residues. 6 WD repeats span residues 184 to 223 (QFKESVWASEISKSGKYLATAGKDAIIRVWKVIETPERRE), 253 to 291 (GHNAEVLSISWSKNDFLLTSSADRTVRLWHPKSTKSLAV), 293 to 333 (RHNE…ILHW), 335 to 374 (ELEYVVSTICFYPDGESIVVGMFYGLCAIYETKNLQYVSS), 387 to 430 (CRVT…LVLK), and 432 to 474 (SDAH…LINA).

The protein localises to the cytoplasm. It localises to the nucleus. This is an uncharacterized protein from Schizosaccharomyces pombe (strain 972 / ATCC 24843) (Fission yeast).